We begin with the raw amino-acid sequence, 163 residues long: MRCPKCNYLKSSVVDSRQAEEGNTIRRRRECENCHTRFTTFERIEELPLLVVKKDGTREQFSRDKIFNGIIRSAQKRPVSSSAIEKVVNDIEQKIRSDYDSEVSSVVIGNLVMDELAELDEITYVRFASVYRSFKDVDEIEALLQQITNRVRSKKKRKADETN.

Residues 3 to 34 (CPKCNYLKSSVVDSRQAEEGNTIRRRRECENC) fold into a zinc finger. The 91-residue stretch at 49-139 (LLVVKKDGTR…VYRSFKDVDE (91 aa)) folds into the ATP-cone domain.

The protein belongs to the NrdR family. Zn(2+) is required as a cofactor.

Its function is as follows. Negatively regulates transcription of bacterial ribonucleotide reductase nrd genes and operons by binding to NrdR-boxes. The sequence is that of Transcriptional repressor NrdR from Streptococcus mutans serotype c (strain ATCC 700610 / UA159).